Here is a 294-residue protein sequence, read N- to C-terminus: Phosphate import ATP-binding protein PstB (294 aa).

Polar residues predominate over residues 1 to 18; it reads MSETMTNQNVVNEEQPFN. Residues 1 to 24 form a disordered region; the sequence is MSETMTNQNVVNEEQPFNESKHRS. Positions 48-289 constitute an ABC transporter domain; the sequence is LEVNKLKLFY…PSCKQTEDYI (242 aa). 80 to 87 contributes to the ATP binding site; it reads GPSGCGKS.

It belongs to the ABC transporter superfamily. Phosphate importer (TC 3.A.1.7) family. As to quaternary structure, the complex is composed of two ATP-binding proteins (PstB), two transmembrane proteins (PstC and PstA) and a solute-binding protein (PstS).

The protein localises to the cell inner membrane. The catalysed reaction is phosphate(out) + ATP + H2O = ADP + 2 phosphate(in) + H(+). Its function is as follows. Part of the ABC transporter complex PstSACB involved in phosphate import. Responsible for energy coupling to the transport system. This chain is Phosphate import ATP-binding protein PstB, found in Hahella chejuensis (strain KCTC 2396).